The chain runs to 151 residues: Ribonuclease H (151 aa).

Residues 1–146 (MPDLYAYTDG…ADELARAGMA (146 aa)) enclose the RNase H type-1 domain. Mg(2+) contacts are provided by Asp-9, Glu-52, Asp-74, and Asp-138.

The protein belongs to the RNase H family. In terms of assembly, monomer. Requires Mg(2+) as cofactor.

Its subcellular location is the cytoplasm. The enzyme catalyses Endonucleolytic cleavage to 5'-phosphomonoester.. Endonuclease that specifically degrades the RNA of RNA-DNA hybrids. The protein is Ribonuclease H of Cereibacter sphaeroides (strain ATCC 17029 / ATH 2.4.9) (Rhodobacter sphaeroides).